Consider the following 105-residue polypeptide: Late embryogenesis abundant protein Lea5-A (105 aa).

It belongs to the LEA type 3 family.

The protein is Late embryogenesis abundant protein Lea5-A (LEA5-A) of Gossypium hirsutum (Upland cotton).